Consider the following 62-residue polypeptide: Small, acid-soluble spore protein A (62 aa).

It belongs to the alpha/beta-type SASP family.

SASP are bound to spore DNA. They are double-stranded DNA-binding proteins that cause DNA to change to an a-like conformation. They protect the DNA backbone from chemical and enzymatic cleavage and are thus involved in dormant spore's high resistance to UV light. This chain is Small, acid-soluble spore protein A (sasP-A), found in Priestia megaterium (Bacillus megaterium).